The following is a 309-amino-acid chain: Heme-dependent oxidative N-demethylase beta subunit (309 aa).

The region spanning 2 to 103 is the FAD-binding FR-type domain; the sequence is STLLDVRVAA…SPPANLFPLH (102 aa). Residues 226 to 309 enclose the 2Fe-2S ferredoxin-type domain; sequence FRVELARSGQ…GCGSPILLDL (84 aa). [2Fe-2S] cluster is bound by residues C260, C265, C268, and C296.

Belongs to the PDR/VanB family. The heme-dependent oxidative N-demethylase (HODM) is a heterotetramer composed of a catalytic alpha subunit, a FMN/2Fe-2S-dependent oxidoreductase beta subunit, a gamma subunit with putative aminotransferase activity, and a delta subunit of unknown function. Requires [2Fe-2S] cluster as cofactor. FMN is required as a cofactor.

Functionally, component of the heme-dependent oxidative N-demethylase (HODM) enzyme, that catalyzes the NADPH-dependent oxidation of dimethylamine (DMA) to methylamine (MA) and formaldehyde. Functions in bacterial methylated amine catabolism, linking alkylamine oxidation to the tetrahydrofolate C1 pool. The beta subunit of HODM binds FMN and a 2Fe-2S cluster, and likely reduces the ferric heme iron of the alpha subunit to ferrous using NADPH. The protein is Heme-dependent oxidative N-demethylase beta subunit of Ectopseudomonas mendocina (strain ymp) (Pseudomonas mendocina).